Here is a 167-residue protein sequence, read N- to C-terminus: Probable chemoreceptor glutamine deamidase CheD (167 aa).

Belongs to the CheD family.

The enzyme catalyses L-glutaminyl-[protein] + H2O = L-glutamyl-[protein] + NH4(+). In terms of biological role, probably deamidates glutamine residues to glutamate on methyl-accepting chemotaxis receptors (MCPs), playing an important role in chemotaxis. The protein is Probable chemoreceptor glutamine deamidase CheD of Natronomonas pharaonis (strain ATCC 35678 / DSM 2160 / CIP 103997 / JCM 8858 / NBRC 14720 / NCIMB 2260 / Gabara) (Halobacterium pharaonis).